The sequence spans 921 residues: Probable dipeptidyl-aminopeptidase B (921 aa).

Positions 1-87 are disordered; sequence MDAPATASRQ…EADTNDLETG (87 aa). Residues 1–108 lie on the Cytoplasmic side of the membrane; sequence MDAPATASRQ…RVGVDRGLKK (108 aa). A compositionally biased stretch (low complexity) spans 22–33; the sequence is SSLSTVSTTSLV. The span at 35–45 shows a compositional bias: basic and acidic residues; the sequence is DRLHEHNEKSY. Over residues 66–75 the composition is skewed to acidic residues; that stretch reads PDDDDDDDES. A helical; Signal-anchor for type II membrane protein membrane pass occupies residues 109 to 129; it reads VILILAAAFLFAWGAALFVFL. Residues 130 to 921 lie on the Vacuolar side of the membrane; sequence SNKSYKHAST…KPIVEPKARV (792 aa). Asparagine 131, asparagine 364, and asparagine 577 each carry an N-linked (GlcNAc...) asparagine glycan. Residue serine 768 is the Charge relay system of the active site. Asparagine 827 carries an N-linked (GlcNAc...) asparagine glycan. Catalysis depends on charge relay system residues aspartate 845 and histidine 878.

This sequence belongs to the peptidase S9B family.

Its subcellular location is the vacuole membrane. The enzyme catalyses Release of an N-terminal dipeptide, Xaa-Yaa-|-Zaa-, from a polypeptide, preferentially when Yaa is Pro, provided Zaa is neither Pro nor hydroxyproline.. Type IV dipeptidyl-peptidase which removes N-terminal dipeptides sequentially from polypeptides having unsubstituted N-termini provided that the penultimate residue is proline. This is Probable dipeptidyl-aminopeptidase B (DAPB) from Colletotrichum graminicola (strain M1.001 / M2 / FGSC 10212) (Maize anthracnose fungus).